Here is a 308-residue protein sequence, read N- to C-terminus: D-alanine--D-alanine ligase (308 aa).

The ATP-grasp domain occupies 100–295 (KEVFVRNGLP…FDGLIGRLIE (196 aa)). 127 to 180 (PFAFPAFIKSNNGGSSLALHRVSCPGELARALDELFTRGGEAIIEPAVEGVEVT) contacts ATP. Residues Asp-249, Glu-262, and Asn-264 each coordinate Mg(2+).

Belongs to the D-alanine--D-alanine ligase family. The cofactor is Mg(2+). Mn(2+) serves as cofactor.

The protein resides in the cytoplasm. It catalyses the reaction 2 D-alanine + ATP = D-alanyl-D-alanine + ADP + phosphate + H(+). The protein operates within cell wall biogenesis; peptidoglycan biosynthesis. Functionally, cell wall formation. The protein is D-alanine--D-alanine ligase of Oleidesulfovibrio alaskensis (strain ATCC BAA-1058 / DSM 17464 / G20) (Desulfovibrio alaskensis).